A 1169-amino-acid chain; its full sequence is Pesticidal crystal protein Cry1Fb (1169 aa).

The protein belongs to the delta endotoxin family.

In terms of biological role, promotes colloidosmotic lysis by binding to the midgut epithelial cells of insects. In Bacillus thuringiensis subsp. morrisoni, this protein is Pesticidal crystal protein Cry1Fb (cry1Fb).